The sequence spans 598 residues: Nuclear receptor subfamily 4 group A member 1 (598 aa).

Disordered regions lie at residues 1-50 and 120-159; these read MPCI…PTAL and LDETLSSSGSDYYGSPCSAPSPSTPSFQPPQLSPWDGSFG. Low complexity-rich tracts occupy residues 37 to 50 and 134 to 145; these read LASPEAAPTAPTAL and SPCSAPSPSTPS. The segment at 171–466 is required for nuclear import; that stretch reads RAWTEQLPKA…PAEGKLIFCS (296 aa). Positions 264–339 form a DNA-binding region, nuclear receptor; it reads EGRCAVCGDN…VGMVKEVVRT (76 aa). 2 NR C4-type zinc fingers span residues 267 to 287 and 303 to 327; these read CAVCGDNASCQHYGVRTCEGC and CLANKDCPVDKRRRNRCQFCRFQKC. Positions 268 to 354 are required for binding NBRE-containing DNA; it reads AVCGDNASCQ…RRGRLPSKPK (87 aa). The segment at 299–361 is required for the interaction with RXRA; sequence AKYICLANKD…KPKQPPDASP (63 aa). A Phosphoserine; by PKA modification is found at S341. The interval 341 to 361 is disordered; it reads SLKGRRGRLPSKPKQPPDASP. S351 bears the Phosphoserine; by PKA, RPS6KA1 and RPS6KA3 mark. Residues 360–595 enclose the NR LBD domain; that stretch reads SPANLLTSLV…PIVDKIFMDT (236 aa). A binds lipopolysaccharide region spans residues 521–544; sequence PRRVEELQNRIASCLKEHVSAVAG. The AF-2 stretch occupies residues 584–595; sequence PPPIVDKIFMDT.

It belongs to the nuclear hormone receptor family. NR4 subfamily. Binds the NGFI-B response element (NBRE) as a monomer. Binds the Nur response element (NurRE), consisting of two inverse NBRE-related octanucleotide repeats separated by 6 base-pairs, as a dimer. Interacts (via N-terminus) with NLRP3 (via LRR repeat domain); the interaction is direct, requires binding of NR4A1/Nur77 to NBRE-containing dsDNA and lipopolysaccharide, and leads to non-canonical NLRP3 inflammasome activation. Interacts with GADD45GIP1. Interacts with STK11. Heterodimer (via DNA-binding domain) with RXRA (via C-terminus); DNA-binding of the heterodimer is enhanced by 9-cis retinoic acid. Competes for the RXRA interaction with EP300 and thereby attenuates EP300 mediated acetylation of RXRA. Interacts with NCOA1. Interacts with NCOA2. Interacts with NCOA3. Requires Zn(2+) as cofactor. Post-translationally, phosphorylated at Ser-351 by RPS6KA1 and RPS6KA3 in response to mitogenic or stress stimuli. Acetylated by p300/CBP, acetylation increases stability. Deacetylated by HDAC1.

The protein localises to the cytoplasm. Its subcellular location is the cytosol. It is found in the nucleus. The protein resides in the mitochondrion. Orphan nuclear receptor. Binds the NGFI-B response element (NBRE) 5'-AAAGGTCA-3'. Binds 9-cis-retinoic acid outside of its ligand-binding (NR LBD) domain. Participates in energy homeostasis by sequestrating the kinase STK11 in the nucleus, thereby attenuating cytoplasmic AMPK activation. Regulates the inflammatory response in macrophages by regulating metabolic adaptations during inflammation, including repressing the transcription of genes involved in the citric acid cycle (TCA). Inhibits NF-kappa-B signaling by binding to low-affinity NF-kappa-B binding sites, such as at the IL2 promoter. May act concomitantly with NR4A2 in regulating the expression of delayed-early genes during liver regeneration. Plays a role in the vascular response to injury. In terms of biological role, in the cytosol, upon its detection of both bacterial lipopolysaccharide (LPS) and NBRE-containing mitochondrial DNA released by GSDMD pores during pyroptosis, it promotes non-canonical NLRP3 inflammasome activation by stimulating association of NLRP3 and NEK7. The chain is Nuclear receptor subfamily 4 group A member 1 (NR4A1) from Canis lupus familiaris (Dog).